The sequence spans 332 residues: Malate dehydrogenase, cytoplasmic (332 aa).

NAD(+) contacts are provided by residues Q16 to I17, D43, and G90. R99 provides a ligand contact to oxaloacetate. NAD(+)-binding residues include Q113 and N132. Residues N132, R163, H188, and S243 each contribute to the oxaloacetate site. The active-site Proton acceptor is H188.

The protein belongs to the LDH/MDH superfamily. MDH type 2 family. As to quaternary structure, homodimer.

The protein localises to the cytoplasm. The enzyme catalyses (S)-malate + NAD(+) = oxaloacetate + NADH + H(+). The polypeptide is Malate dehydrogenase, cytoplasmic (NR1) (Beta vulgaris (Sugar beet)).